Consider the following 35-residue polypeptide: Dermonecrotic toxin LgSicTox-beta-LOXN4 (35 aa).

D20 provides a ligand contact to Mg(2+).

It belongs to the arthropod phospholipase D family. Class II subfamily. Requires Mg(2+) as cofactor. In terms of processing, contains 2 disulfide bonds. In terms of tissue distribution, expressed by the venom gland.

It is found in the secreted. It carries out the reaction an N-(acyl)-sphingosylphosphocholine = an N-(acyl)-sphingosyl-1,3-cyclic phosphate + choline. It catalyses the reaction an N-(acyl)-sphingosylphosphoethanolamine = an N-(acyl)-sphingosyl-1,3-cyclic phosphate + ethanolamine. The enzyme catalyses a 1-acyl-sn-glycero-3-phosphocholine = a 1-acyl-sn-glycero-2,3-cyclic phosphate + choline. The catalysed reaction is a 1-acyl-sn-glycero-3-phosphoethanolamine = a 1-acyl-sn-glycero-2,3-cyclic phosphate + ethanolamine. Its function is as follows. Dermonecrotic toxins cleave the phosphodiester linkage between the phosphate and headgroup of certain phospholipids (sphingolipid and lysolipid substrates), forming an alcohol (often choline) and a cyclic phosphate. This toxin acts on sphingomyelin (SM). It may also act on ceramide phosphoethanolamine (CPE), lysophosphatidylcholine (LPC) and lysophosphatidylethanolamine (LPE), but not on lysophosphatidylserine (LPS), and lysophosphatidylglycerol (LPG). It acts by transphosphatidylation, releasing exclusively cyclic phosphate products as second products. Induces dermonecrosis, hemolysis, increased vascular permeability, edema, inflammatory response, and platelet aggregation. The chain is Dermonecrotic toxin LgSicTox-beta-LOXN4 from Loxosceles gaucho (Spider).